Here is a 236-residue protein sequence, read N- to C-terminus: 2-C-methyl-D-erythritol 4-phosphate cytidylyltransferase (236 aa).

Belongs to the IspD/TarI cytidylyltransferase family. IspD subfamily. Homodimer.

It catalyses the reaction 2-C-methyl-D-erythritol 4-phosphate + CTP + H(+) = 4-CDP-2-C-methyl-D-erythritol + diphosphate. Its pathway is isoprenoid biosynthesis; isopentenyl diphosphate biosynthesis via DXP pathway; isopentenyl diphosphate from 1-deoxy-D-xylulose 5-phosphate: step 2/6. In terms of biological role, catalyzes the formation of 4-diphosphocytidyl-2-C-methyl-D-erythritol from CTP and 2-C-methyl-D-erythritol 4-phosphate (MEP). The polypeptide is 2-C-methyl-D-erythritol 4-phosphate cytidylyltransferase (Salmonella heidelberg (strain SL476)).